Here is a 348-residue protein sequence, read N- to C-terminus: NADH-quinone oxidoreductase subunit H 1 (348 aa).

A run of 8 helical transmembrane segments spans residues 11-31 (IYYISMVAKVLVVFVFVLLTV), 83-103 (FAFLIAPIIALVPAFIGFAVI), 136-156 (VGVLYILALASIGVYGIVLAG), 172-192 (SAQMISYELAAGLAIISVFML), 208-228 (GAWYCFKQPLAFILFFICSLA), 268-288 (MVTVCAVTTTLFLGGWHGPAF), 289-309 (LPGWAWFIAKVYFLIFVCMWI), and 324-344 (LGWKVFLPLTLVNIIVTGIVV).

It belongs to the complex I subunit 1 family. As to quaternary structure, NDH-1 is composed of 14 different subunits. Subunits NuoA, H, J, K, L, M, N constitute the membrane sector of the complex.

It localises to the cell inner membrane. It carries out the reaction a quinone + NADH + 5 H(+)(in) = a quinol + NAD(+) + 4 H(+)(out). NDH-1 shuttles electrons from NADH, via FMN and iron-sulfur (Fe-S) centers, to quinones in the respiratory chain. The immediate electron acceptor for the enzyme in this species is believed to be ubiquinone. Couples the redox reaction to proton translocation (for every two electrons transferred, four hydrogen ions are translocated across the cytoplasmic membrane), and thus conserves the redox energy in a proton gradient. This subunit may bind ubiquinone. The protein is NADH-quinone oxidoreductase subunit H 1 of Geobacter sulfurreducens (strain ATCC 51573 / DSM 12127 / PCA).